The primary structure comprises 338 residues: 4-hydroxythreonine-4-phosphate dehydrogenase (338 aa).

His-136 and Thr-137 together coordinate substrate. Residues His-173, His-218, and His-273 each contribute to the a divalent metal cation site. Substrate-binding residues include Lys-281, Asn-290, and Arg-299.

Belongs to the PdxA family. In terms of assembly, homodimer. Requires Zn(2+) as cofactor. The cofactor is Mg(2+). Co(2+) serves as cofactor.

The protein localises to the cytoplasm. The catalysed reaction is 4-(phosphooxy)-L-threonine + NAD(+) = 3-amino-2-oxopropyl phosphate + CO2 + NADH. The protein operates within cofactor biosynthesis; pyridoxine 5'-phosphate biosynthesis; pyridoxine 5'-phosphate from D-erythrose 4-phosphate: step 4/5. In terms of biological role, catalyzes the NAD(P)-dependent oxidation of 4-(phosphooxy)-L-threonine (HTP) into 2-amino-3-oxo-4-(phosphooxy)butyric acid which spontaneously decarboxylates to form 3-amino-2-oxopropyl phosphate (AHAP). This is 4-hydroxythreonine-4-phosphate dehydrogenase from Ralstonia nicotianae (strain ATCC BAA-1114 / GMI1000) (Ralstonia solanacearum).